Consider the following 484-residue polypeptide: Pre-glycoprotein polyprotein GP complex (484 aa).

G2 carries N-myristoyl glycine; by host lipidation. The Extracellular segment spans residues 2 to 17 (GQLVSFFQEIPNIIQE). A helical membrane pass occupies residues 18–33 (AINIALIAVSLIAILK). Residues 34 to 58 (GLVNLWKSGLFQLLVFLILAGRSCS) are Cytoplasmic-facing. C57 provides a ligand contact to Zn(2+). Residues 59 to 423 (FKIGRSTELQ…QGKTPITLVD (365 aa)) are Extracellular-facing. Intrachain disulfides connect C85–C225, C270–C283, C292–C301, and C355–C376. N88, N125, N178, and N218 each carry an N-linked (GlcNAc...) asparagine; by host glycan. 4 N-linked (GlcNAc...) asparagine; by host glycosylation sites follow: N356, N364, N381, and N386. The chain crosses the membrane as a helical span at residues 424-444 (ICFWSTLFFTTTLFLHLVGFP). Residues 445–484 (THRHIQGEPCPLPHKLNSNGGCRCGRYPELKKPTTWHRKH) are Cytoplasmic-facing. The Zn(2+) site is built by H446, H448, C454, H458, C466, C468, and H484.

It belongs to the arenaviridae GPC protein family. In terms of assembly, interacts with glycoprotein G2. Part of the GP complex (GP-C) together with glycoprotein G1 and glycoprotein G2. The GP-complex interacts with protein Z, which interacts with ribonucleocapsid; these interactions may induce virion budding. As to quaternary structure, homotrimer; disulfide-linked. In pre-fusion state, G1 homotrimers bind G2 homotrimers via ionic interactions. Part of the GP complex (GP-C) together with glycoprotein G2 and the stable signal peptide. The GP-complex interacts with protein Z, which interacts with ribonucleocapsid; these interactions may induce virion budding. Homotrimer. Interacts with the stable signal peptide. In pre-fusion state, G2 homotrimers bind G1 homotrimers via ionic interactions. Part of the GP complex (GP-C) together with glycoprotein G1 and the stable signal peptide. Acidification in the endosome triggers rearrangements, which ultimately leads to a 6 helix bundle formed by the two heptad repeat domains (HR1 and HR2) in post-fusion state. The GP-complex interacts with protein Z, which interacts with ribonucleocapsid; these interactions may induce virion budding. Specific enzymatic cleavages in vivo yield mature proteins. GP-C polyprotein is cleaved in the endoplasmic reticulum by the host protease MBTPS1. Only cleaved glycoprotein is incorporated into virions. Post-translationally, the SSP remains stably associated with the GP complex following cleavage by signal peptidase and plays crucial roles in the trafficking of GP through the secretory pathway. In terms of processing, myristoylation is necessary for GP2-mediated fusion activity.

It localises to the virion membrane. It is found in the host endoplasmic reticulum membrane. The protein localises to the host Golgi apparatus membrane. Its subcellular location is the host cell membrane. Its function is as follows. Functions as a cleaved signal peptide that is retained as the third component of the GP complex (GP-C). Helps to stabilize the spike complex in its native conformation. The SSP is required for efficient glycoprotein expression, post-translational maturation cleavage of G1 and G2, glycoprotein transport to the cell surface plasma membrane, formation of infectious virus particles, and acid pH-dependent glycoprotein-mediated cell fusion. Glycoprotein G1: Forms the virion spikes together with glycoprotein G2. The glycoprotein spike trimers are connected to the underlying matrix. Interacts with the host receptor leading to virus endocytosis. Functionally, forms the virion spikes together with glycoprotein G1. The glycoprotein spike trimers are connected to the underlying matrix. Class I viral fusion protein that directs fusion of viral and host endosomal membranes, leading to delivery of the nucleocapsid into the cytoplasm. Membrane fusion is mediated by irreversible conformational changes induced by acidification. In Chapare mammarenavirus (isolate Human/Bolivia/810419/2003), this protein is Pre-glycoprotein polyprotein GP complex.